The primary structure comprises 572 residues: Proline--tRNA ligase (572 aa).

Belongs to the class-II aminoacyl-tRNA synthetase family. ProS type 1 subfamily. Homodimer.

The protein localises to the cytoplasm. The enzyme catalyses tRNA(Pro) + L-proline + ATP = L-prolyl-tRNA(Pro) + AMP + diphosphate. In terms of biological role, catalyzes the attachment of proline to tRNA(Pro) in a two-step reaction: proline is first activated by ATP to form Pro-AMP and then transferred to the acceptor end of tRNA(Pro). As ProRS can inadvertently accommodate and process non-cognate amino acids such as alanine and cysteine, to avoid such errors it has two additional distinct editing activities against alanine. One activity is designated as 'pretransfer' editing and involves the tRNA(Pro)-independent hydrolysis of activated Ala-AMP. The other activity is designated 'posttransfer' editing and involves deacylation of mischarged Ala-tRNA(Pro). The misacylated Cys-tRNA(Pro) is not edited by ProRS. This Citrobacter koseri (strain ATCC BAA-895 / CDC 4225-83 / SGSC4696) protein is Proline--tRNA ligase.